We begin with the raw amino-acid sequence, 3912 residues long: Chondramide synthase cmdD (3912 aa).

The Carrier 1 domain occupies 1411–1485 (APRNAREETL…ALAEVASASK (75 aa)). O-(pantetheine 4'-phosphoryl)serine is present on Ser1446. Over residues 1995–2029 (ADEDDEEDDELDEEFDAEVDEEDEDEEEEEDDDGE) the composition is skewed to acidic residues. The disordered stretch occupies residues 1995-2030 (ADEDDEEDDELDEEFDAEVDEEDEDEEEEEDDDGEN). In terms of domain architecture, Carrier 2 spans 2989–3064 (APRTATEETL…VLARVIDEAL (76 aa)). O-(pantetheine 4'-phosphoryl)serine is present on Ser3024.

It belongs to the ATP-dependent AMP-binding enzyme family. It depends on pantetheine 4'-phosphate as a cofactor.

Functionally, involved in the synthesis of chondramides. Activates R-beta-tyrosine and probably phenylalanine. The polypeptide is Chondramide synthase cmdD (Chondromyces crocatus).